The sequence spans 342 residues: 4-hydroxythreonine-4-phosphate dehydrogenase (342 aa).

H139 and T140 together coordinate substrate. Residues H174, H219, and H274 each coordinate a divalent metal cation. Residues K282, N291, and R300 each contribute to the substrate site.

This sequence belongs to the PdxA family. Homodimer. The cofactor is Zn(2+). It depends on Mg(2+) as a cofactor. Requires Co(2+) as cofactor.

Its subcellular location is the cytoplasm. The enzyme catalyses 4-(phosphooxy)-L-threonine + NAD(+) = 3-amino-2-oxopropyl phosphate + CO2 + NADH. Its pathway is cofactor biosynthesis; pyridoxine 5'-phosphate biosynthesis; pyridoxine 5'-phosphate from D-erythrose 4-phosphate: step 4/5. Catalyzes the NAD(P)-dependent oxidation of 4-(phosphooxy)-L-threonine (HTP) into 2-amino-3-oxo-4-(phosphooxy)butyric acid which spontaneously decarboxylates to form 3-amino-2-oxopropyl phosphate (AHAP). The chain is 4-hydroxythreonine-4-phosphate dehydrogenase from Mesorhizobium japonicum (strain LMG 29417 / CECT 9101 / MAFF 303099) (Mesorhizobium loti (strain MAFF 303099)).